Reading from the N-terminus, the 321-residue chain is 2,3,4,5-tetrahydropyridine-2,6-dicarboxylate N-succinyltransferase (321 aa).

Asp-166 and Glu-183 together coordinate Mg(2+). Glu-199 serves as the catalytic Acyl-anhydride intermediate. Succinyl-CoA-binding positions include Arg-201, Gly-216, Ser-219, Ala-242, 257–258 (EA), Gly-265, Lys-281, and 294–297 (RRNS).

Belongs to the type 2 tetrahydrodipicolinate N-succinyltransferase family. As to quaternary structure, homotrimer.

It is found in the cytoplasm. It catalyses the reaction (S)-2,3,4,5-tetrahydrodipicolinate + succinyl-CoA + H2O = (S)-2-succinylamino-6-oxoheptanedioate + CoA. It functions in the pathway amino-acid biosynthesis; L-lysine biosynthesis via DAP pathway; LL-2,6-diaminopimelate from (S)-tetrahydrodipicolinate (succinylase route): step 1/3. Its function is as follows. Catalyzes the conversion of the cyclic tetrahydrodipicolinate (THDP) into the acyclic N-succinyl-L-2-amino-6-oxopimelate using succinyl-CoA. This Micrococcus luteus (strain ATCC 4698 / DSM 20030 / JCM 1464 / CCM 169 / CCUG 5858 / IAM 1056 / NBRC 3333 / NCIMB 9278 / NCTC 2665 / VKM Ac-2230) (Micrococcus lysodeikticus) protein is 2,3,4,5-tetrahydropyridine-2,6-dicarboxylate N-succinyltransferase.